A 225-amino-acid polypeptide reads, in one-letter code: Ribonuclease HII (225 aa).

Residues 28 to 220 (DIIAGTDEVG…VKEYVDISQE (193 aa)) form the RNase H type-2 domain. The a divalent metal cation site is built by Asp-34, Glu-35, and Asp-129.

Belongs to the RNase HII family. The cofactor is Mn(2+). It depends on Mg(2+) as a cofactor.

It is found in the cytoplasm. The catalysed reaction is Endonucleolytic cleavage to 5'-phosphomonoester.. Functionally, endonuclease that specifically degrades the RNA of RNA-DNA hybrids. In Desulfotalea psychrophila (strain LSv54 / DSM 12343), this protein is Ribonuclease HII.